We begin with the raw amino-acid sequence, 911 residues long: Valine--tRNA ligase (911 aa).

Residues 57–67 carry the 'HIGH' region motif; sequence PTVSGSLHVGH. The 'KMSKS' region motif lies at 599 to 603; that stretch reads KMSKS. Lysine 602 lines the ATP pocket. Residues 882-911 form a disordered region; it reads EESAAEDAPETEVAVEASELGEPPAKKPKH.

Belongs to the class-I aminoacyl-tRNA synthetase family. ValS type 2 subfamily. Monomer.

The protein localises to the cytoplasm. It carries out the reaction tRNA(Val) + L-valine + ATP = L-valyl-tRNA(Val) + AMP + diphosphate. Catalyzes the attachment of valine to tRNA(Val). As ValRS can inadvertently accommodate and process structurally similar amino acids such as threonine, to avoid such errors, it has a 'posttransfer' editing activity that hydrolyzes mischarged Thr-tRNA(Val) in a tRNA-dependent manner. This Bifidobacterium longum (strain DJO10A) protein is Valine--tRNA ligase.